Reading from the N-terminus, the 430-residue chain is Tol-Pal system protein TolB (430 aa).

The first 21 residues, 1-21 (MKQALRVAFGFLMLWAAMLHA), serve as a signal peptide directing secretion.

The protein belongs to the TolB family. In terms of assembly, the Tol-Pal system is composed of five core proteins: the inner membrane proteins TolA, TolQ and TolR, the periplasmic protein TolB and the outer membrane protein Pal. They form a network linking the inner and outer membranes and the peptidoglycan layer.

The protein localises to the periplasm. Its function is as follows. Part of the Tol-Pal system, which plays a role in outer membrane invagination during cell division and is important for maintaining outer membrane integrity. TolB occupies a key intermediary position in the Tol-Pal system because it communicates directly with both membrane-embedded components, Pal in the outer membrane and TolA in the inner membrane. This chain is Tol-Pal system protein TolB, found in Escherichia fergusonii (strain ATCC 35469 / DSM 13698 / CCUG 18766 / IAM 14443 / JCM 21226 / LMG 7866 / NBRC 102419 / NCTC 12128 / CDC 0568-73).